The chain runs to 665 residues: Transketolase (665 aa).

H26 provides a ligand contact to substrate. Residues H66 and 114 to 116 contribute to the thiamine diphosphate site; that span reads GPL. The disordered stretch occupies residues 94-114; that stretch reads NSKTPGHPETGETPGVETTTG. Positions 97–114 are enriched in low complexity; it reads TPGHPETGETPGVETTTG. Mg(2+) is bound at residue D155. Residues G156 and N185 each coordinate thiamine diphosphate. The Mg(2+) site is built by N185 and I187. The substrate site is built by H261, R358, and S385. H261 provides a ligand contact to thiamine diphosphate. The active-site Proton donor is E411. F437 is a binding site for thiamine diphosphate. The substrate site is built by H461, D469, and R520.

The protein belongs to the transketolase family. In terms of assembly, homodimer. Mg(2+) serves as cofactor. Ca(2+) is required as a cofactor. Requires Mn(2+) as cofactor. The cofactor is Co(2+). It depends on thiamine diphosphate as a cofactor.

It carries out the reaction D-sedoheptulose 7-phosphate + D-glyceraldehyde 3-phosphate = aldehydo-D-ribose 5-phosphate + D-xylulose 5-phosphate. In terms of biological role, catalyzes the transfer of a two-carbon ketol group from a ketose donor to an aldose acceptor, via a covalent intermediate with the cofactor thiamine pyrophosphate. The sequence is that of Transketolase (tkt) from Buchnera aphidicola subsp. Acyrthosiphon pisum (strain APS) (Acyrthosiphon pisum symbiotic bacterium).